Here is a 171-residue protein sequence, read N- to C-terminus: MDYFTLFGLPARYQIDTQALSLRFQDLQRQYHPDKFANGTQAQQLAAVQQSATINQAWQTLRHPLTRAEYLLSLHGFDLASEQHTVRDTAFLMEQLTLREELDDIEQSKDDARLESFIKRVQKMFDARLQQMVEQLDNAAWDAAADTVRKLRFLDKLRSSAEQLEEKLLDF.

In terms of domain architecture, J spans 2–74; the sequence is DYFTLFGLPA…LTRAEYLLSL (73 aa).

Belongs to the HscB family. As to quaternary structure, interacts with HscA and stimulates its ATPase activity. Interacts with IscU.

Functionally, co-chaperone involved in the maturation of iron-sulfur cluster-containing proteins. Seems to help targeting proteins to be folded toward HscA. This is Co-chaperone protein HscB from Salmonella typhimurium (strain LT2 / SGSC1412 / ATCC 700720).